The chain runs to 892 residues: Alanine--tRNA ligase (892 aa).

Residues His577, His581, Cys680, and His684 each coordinate Zn(2+).

This sequence belongs to the class-II aminoacyl-tRNA synthetase family. Zn(2+) is required as a cofactor.

It localises to the cytoplasm. The enzyme catalyses tRNA(Ala) + L-alanine + ATP = L-alanyl-tRNA(Ala) + AMP + diphosphate. Catalyzes the attachment of alanine to tRNA(Ala) in a two-step reaction: alanine is first activated by ATP to form Ala-AMP and then transferred to the acceptor end of tRNA(Ala). Also edits incorrectly charged Ser-tRNA(Ala) and Gly-tRNA(Ala) via its editing domain. This Arthrobacter sp. (strain FB24) protein is Alanine--tRNA ligase.